Consider the following 291-residue polypeptide: Ubiquinone biosynthesis protein COQ4, mitochondrial (291 aa).

The transit peptide at 1–37 (MLGRRSVSLLRGLTELPVSSRAHTALRALSVPQTRRN) directs the protein to the mitochondrion. Positions 169, 170, 173, and 185 each coordinate Zn(2+). Positions 271–283 (PLNEAKEAAERRS) are enriched in basic and acidic residues. The segment at 271–291 (PLNEAKEAAERRSKTTQNQIY) is disordered.

The protein belongs to the COQ4 family. In terms of assembly, component of a multi-subunit COQ enzyme complex, composed of at least COQ3, COQ4, COQ5, COQ6, COQ7 and COQ9. It depends on Zn(2+) as a cofactor.

It localises to the mitochondrion inner membrane. The catalysed reaction is a 4-hydroxy-3-methoxy-5-(all-trans-polyprenyl)benzoate + H(+) = a 2-methoxy-6-(all-trans-polyprenyl)phenol + CO2. It participates in cofactor biosynthesis; ubiquinone biosynthesis. Lyase that catalyzes the C1-decarboxylation of 4-hydroxy-3-methoxy-5-(all-trans-polyprenyl)benzoic acid into 2-methoxy-6-(all-trans-polyprenyl)phenol during ubiquinone biosynthesis. This is Ubiquinone biosynthesis protein COQ4, mitochondrial from Coprinopsis cinerea (strain Okayama-7 / 130 / ATCC MYA-4618 / FGSC 9003) (Inky cap fungus).